We begin with the raw amino-acid sequence, 209 residues long: Probable chalcone--flavanone isomerase 3 (209 aa).

This sequence belongs to the chalcone isomerase family.

It catalyses the reaction a chalcone = a flavanone.. It participates in secondary metabolite biosynthesis; flavonoid biosynthesis. Involved in anthocyanin biosynthesis. In Arabidopsis thaliana (Mouse-ear cress), this protein is Probable chalcone--flavanone isomerase 3 (CHI3).